Reading from the N-terminus, the 233-residue chain is Membrane glycoprotein UL9 (233 aa).

The signal sequence occupies residues 1–20; that stretch reads MSKRLQVFPWITILFYTSKS. N-linked (GlcNAc...) asparagine; by host glycosylation is found at N40, N94, N101, N131, and N169. Residues 194–214 form a helical membrane-spanning segment; that stretch reads MWIIPLVIVITIIVLICFKFP.

It belongs to the HHV-5 UL9 family.

It localises to the host membrane. The protein is Membrane glycoprotein UL9 (UL9) of Homo sapiens (Human).